We begin with the raw amino-acid sequence, 230 residues long: Porin OmpL (230 aa).

The first 20 residues, 1-20 (MKNINAIILLSSLTSASVFA), serve as a signal peptide directing secretion.

This sequence belongs to the oligogalacturonate-specific porin KdgM (TC 1.B.35) family. OmpL subfamily.

It localises to the cell outer membrane. Its function is as follows. Outer membrane channel protein that allows an efficient diffusion of low-molecular-weight solutes such as small sugars and tetraglycine. However, the specific substrate recognized by the OmpL channel is unknown. In Escherichia coli O157:H7, this protein is Porin OmpL (ompL).